A 135-amino-acid chain; its full sequence is Interleukin-4 (135 aa).

The N-terminal stretch at 1 to 24 is a signal peptide; it reads MGLTYQLIPVLVCLLVCTSHLVHG. Cystine bridges form between cysteine 27/cysteine 135, cysteine 48/cysteine 85, and cysteine 70/cysteine 105. Asparagine 62 carries N-linked (GlcNAc...) asparagine glycosylation.

The protein belongs to the IL-4/IL-13 family.

The protein localises to the secreted. Participates in at least several B-cell activation processes as well as of other cell types. It is a costimulator of DNA-synthesis. It induces the expression of class II MHC molecules on resting B-cells. It enhances both secretion and cell surface expression of IgE and IgG1. It also regulates the expression of the low affinity Fc receptor for IgE (CD23) on both lymphocytes and monocytes. Positively regulates IL31RA expression in macrophages. Stimulates autophagy in dendritic cells by interfering with mTORC1 signaling and through the induction of RUFY4. In Bubalus bubalis (Domestic water buffalo), this protein is Interleukin-4 (IL4).